Consider the following 264-residue polypeptide: Proteasome subunit beta type-5 (264 aa).

Residues 1–59 constitute a propeptide, removed in mature form; the sequence is MALASVLQRPMPVNQHGFFGLGGGADLLDLGPGSPGDGLSLAAPSWGVPEEPRIEMLHG. Thr60 acts as the Nucleophile in catalysis. Ala108 serves as a coordination point for bortezomib.

It belongs to the peptidase T1B family. As to quaternary structure, the 26S proteasome consists of a 20S proteasome core and two 19S regulatory subunits. The 20S proteasome core is a barrel-shaped complex made of 28 subunits that are arranged in four stacked rings. The two outer rings are each formed by seven alpha subunits, and the two inner rings are formed by seven beta subunits. The proteolytic activity is exerted by three beta-subunits PSMB5, PSMB6 and PSMB7. Directly interacts with POMP. Interacts with ABCB1 and TAP1. Expressed in uterus at the embryo implantation site.

It localises to the cytoplasm. The protein localises to the nucleus. It catalyses the reaction Cleavage of peptide bonds with very broad specificity.. Component of the 20S core proteasome complex involved in the proteolytic degradation of most intracellular proteins. This complex plays numerous essential roles within the cell by associating with different regulatory particles. Associated with two 19S regulatory particles, forms the 26S proteasome and thus participates in the ATP-dependent degradation of ubiquitinated proteins. The 26S proteasome plays a key role in the maintenance of protein homeostasis by removing misfolded or damaged proteins that could impair cellular functions, and by removing proteins whose functions are no longer required. Associated with the PA200 or PA28, the 20S proteasome mediates ubiquitin-independent protein degradation. This type of proteolysis is required in several pathways including spermatogenesis (20S-PA200 complex) or generation of a subset of MHC class I-presented antigenic peptides (20S-PA28 complex). Within the 20S core complex, PSMB5 displays a chymotrypsin-like activity. The polypeptide is Proteasome subunit beta type-5 (Psmb5) (Mus musculus (Mouse)).